The sequence spans 121 residues: uncharacterized protein (121 aa).

Disordered stretches follow at residues S24–G43 and D100–R121.

This is an uncharacterized protein from Homo sapiens (Human).